Here is a 157-residue protein sequence, read N- to C-terminus: 2-C-methyl-D-erythritol 2,4-cyclodiphosphate synthase (157 aa).

Residues aspartate 8 and histidine 10 each contribute to the a divalent metal cation site. 4-CDP-2-C-methyl-D-erythritol 2-phosphate contacts are provided by residues 8–10 and 34–35; these read DVH and HS. A divalent metal cation is bound at residue histidine 42. Residues 56–58, 61–65, 132–135, and phenylalanine 139 each bind 4-CDP-2-C-methyl-D-erythritol 2-phosphate; these read DIG, FPDTD, and TTEE.

Belongs to the IspF family. As to quaternary structure, homotrimer. It depends on a divalent metal cation as a cofactor.

It catalyses the reaction 4-CDP-2-C-methyl-D-erythritol 2-phosphate = 2-C-methyl-D-erythritol 2,4-cyclic diphosphate + CMP. It functions in the pathway isoprenoid biosynthesis; isopentenyl diphosphate biosynthesis via DXP pathway; isopentenyl diphosphate from 1-deoxy-D-xylulose 5-phosphate: step 4/6. In terms of biological role, involved in the biosynthesis of isopentenyl diphosphate (IPP) and dimethylallyl diphosphate (DMAPP), two major building blocks of isoprenoid compounds. Catalyzes the conversion of 4-diphosphocytidyl-2-C-methyl-D-erythritol 2-phosphate (CDP-ME2P) to 2-C-methyl-D-erythritol 2,4-cyclodiphosphate (ME-CPP) with a corresponding release of cytidine 5-monophosphate (CMP). This Clostridium botulinum (strain Alaska E43 / Type E3) protein is 2-C-methyl-D-erythritol 2,4-cyclodiphosphate synthase.